A 118-amino-acid chain; its full sequence is NADH dehydrogenase [ubiquinone] iron-sulfur protein 5-A (118 aa).

One can recognise a CHCH domain in the interval 46–87 (KGRCYDFWMDFSECMSHCREPKDCTLLREDYLECLHHSKEFQ). 2 consecutive short sequence motifs (cx9C motif) follow at residues 49-59 (CYDFWMDFSEC) and 69-79 (CTLLREDYLEC). Cystine bridges form between cysteine 49/cysteine 79 and cysteine 59/cysteine 69. The tract at residues 98–118 (RKLRAASRKGEEAGDGTHNHH) is disordered.

It belongs to the complex I NDUFS5 subunit family. In terms of assembly, complex I is composed of at least 49 different subunits. This is a component of the iron-sulfur (IP) fragment of the enzyme.

It localises to the mitochondrion. The protein localises to the mitochondrion inner membrane. Its subcellular location is the mitochondrion intermembrane space. Its function is as follows. Accessory subunit of the mitochondrial membrane respiratory chain NADH dehydrogenase (Complex I), that is believed not to be involved in catalysis. Complex I functions in the transfer of electrons from NADH to the respiratory chain. The immediate electron acceptor for the enzyme is believed to be ubiquinone. This chain is NADH dehydrogenase [ubiquinone] iron-sulfur protein 5-A, found in Arabidopsis thaliana (Mouse-ear cress).